A 352-amino-acid chain; its full sequence is Non-disjunction protein 1 (352 aa).

As to quaternary structure, interacts with MPS3.

It localises to the nucleus. It is found in the chromosome. The protein resides in the telomere. In terms of biological role, required for telomeric clustering (bouquet stage) during meiosis 1 prophase, formation and efficient homolog pairing, meiosis 1 disjunction, and telomere deletion during meiosis. Also promotes meiotic recombination. The chain is Non-disjunction protein 1 (NDJ1) from Saccharomyces cerevisiae (strain ATCC 204508 / S288c) (Baker's yeast).